The primary structure comprises 642 residues: Serotransferrin (642 aa).

Transferrin-like domains follow at residues 1–280 (GIKE…SLKK) and 290–621 (IKWC…SLRQ). Positions 25 and 54 each coordinate Fe(3+). Disulfide bonds link Cys-77/Cys-158, Cys-121/Cys-137, and Cys-186/Cys-200. Hydrogencarbonate is bound by residues Thr-79, Lys-83, Ala-85, and Gly-86. Tyr-152 is a binding site for Fe(3+). His-208 contributes to the Fe(3+) binding site. Cystine bridges form between Cys-293/Cys-329 and Cys-303/Cys-320. Position 344 (Asp-344) interacts with Fe(3+). 7 disulfide bridges follow: Cys-354/Cys-633, Cys-369/Cys-594, Cys-402/Cys-480, Cys-426/Cys-622, Cys-436/Cys-450, Cys-447/Cys-463, and Cys-520/Cys-535. An N-linked (GlcNAc...) asparagine glycan is attached at Asn-365. Tyr-379 contributes to the Fe(3+) binding site. Hydrogencarbonate contacts are provided by Thr-404, Arg-408, Ala-410, and Gly-411. Residue Tyr-474 coordinates Fe(3+). A Fe(3+)-binding site is contributed by His-543.

It belongs to the transferrin family. Monomer. As to expression, brain and liver; to a lesser extent in kidney and heart.

It is found in the secreted. In terms of biological role, transferrins are iron binding transport proteins which can bind two Fe(3+) ions in association with the binding of an anion, usually bicarbonate. The chain is Serotransferrin (tf) from Gadus morhua (Atlantic cod).